Here is a 293-residue protein sequence, read N- to C-terminus: Putative DNA glycosylase At3g47830 (293 aa).

Residues 1–10 (MSKAQKRKRL) are compositionally biased toward basic residues. The segment at 1-34 (MSKAQKRKRLNKYDGESKTPANKSTVDGGNPYPT) is disordered. Residues N108 and K151 each coordinate DNA. The active-site Schiff-base intermediate with DNA is the K196. Residues H216 and D232 each coordinate DNA.

This sequence belongs to the DNA glycosylase family.

The protein is Putative DNA glycosylase At3g47830 of Arabidopsis thaliana (Mouse-ear cress).